We begin with the raw amino-acid sequence, 626 residues long: Basic helix-loop-helix ARNT-like protein 1 (626 aa).

The segment at methionine 1 to arginine 60 is disordered. Position 17 is a phosphoserine; by GSK3-beta (serine 17). Low complexity predominate over residues serine 17–glycine 32. Threonine 21 carries the post-translational modification Phosphothreonine; by GSK3-beta. Positions asparagine 36–glycine 41 match the Nuclear localization signal motif. The span at aspartate 51–arginine 60 shows a compositional bias: basic and acidic residues. One can recognise a bHLH domain in the interval asparagine 72 to leucine 125. Phosphoserine is present on serine 78. Serine 90 bears the Phosphoserine; by CK2 mark. Residues leucine 142–leucine 152 carry the Nuclear export signal 1 motif. One can recognise a PAS 1 domain in the interval serine 143–proline 215. Lysine 252 participates in a covalent cross-link: Glycyl lysine isopeptide (Lys-Gly) (interchain with G-Cter in SUMO2 and SUMO3). Lysine 259 is covalently cross-linked (Glycyl lysine isopeptide (Lys-Gly) (interchain with G-Cter in SUMO); alternate). Residue lysine 259 forms a Glycyl lysine isopeptide (Lys-Gly) (interchain with G-Cter in SUMO2); alternate linkage. The PAS 2 domain maps to proline 326–arginine 396. The short motif at leucine 361 to leucine 369 is the Nuclear export signal 2 element. Positions asparagine 402–valine 445 constitute a PAC domain. Disordered regions lie at residues alanine 458 to glycine 493 and glycine 511 to aspartate 596. A compositionally biased stretch (gly residues) spans isoleucine 484–glycine 493. The segment at arginine 508–glutamine 588 is interaction with CIART. Low complexity predominate over residues glycine 511–proline 521. Lysine 538 is modified (N6-acetyllysine).

Component of the circadian clock oscillator which includes the CRY1/2 proteins, CLOCK or NPAS2, BMAL1 or BMAL2, CSNK1D and/or CSNK1E, TIMELESS and the PER1/2/3 proteins. Forms a heterodimer with CLOCK. The CLOCK-BMAL1 heterodimer is required for E-box-dependent transactivation, for CLOCK nuclear translocation and degradation, and, for phosphorylation of both CLOCK and BMAL1. Part of a nuclear complex which also includes RACK1 and PRKCA; RACK1 and PRKCA are recruited to the complex in a circadian manner. Interacts with NPAS2. Interacts with EZH2. Interacts with SUMO3. Interacts with SIRT1. Interacts with AHR. Interacts with ID1, ID2 and ID3. Interacts with DDX4. Interacts with OGT. Interacts with EED and SUZ12. Interacts with MTA1. Interacts with CIART. Interacts with HSP90. Interacts with KAT2B and EP300. Interacts with BHLHE40/DEC1 and BHLHE41/DEC2. Interacts with RELB and the interaction is enhanced in the presence of CLOCK. Interacts with PER1, PER2, CRY1 and CRY2 and this interaction requires a translocation to the nucleus. Interaction of the CLOCK-BMAL1 heterodimer with PER or CRY inhibits transcription activation. Interaction of the CLOCK-BMAL1 with CRY1 is independent of DNA but with PER2 is off DNA. The CLOCK-BMAL1 heterodimer interacts with GSK3B. Interacts with KDM5A. Interacts with KMT2A; in a circadian manner. Interacts with UBE3A. Interacts with PRKCG. Interacts with MAGEL2. Interacts with NCOA2. Interacts with THRAP3. The CLOCK-BMAL1 heterodimer interacts with PASD1. Interacts with PASD1. Interacts with USP9X. Interacts with PIWIL2 (via PIWI domain). Interacts with HDAC3. Interacts with HNF4A. In terms of processing, ubiquitinated, leading to its proteasomal degradation. Deubiquitinated by USP9X. Post-translationally, O-glycosylated; contains O-GlcNAc. O-glycosylation by OGT prevents protein degradation by inhibiting ubiquitination. It also stabilizes the CLOCK-BMAL1 heterodimer thereby increasing CLOCK-BMAL1-mediated transcription of genes in the negative loop of the circadian clock such as PER1/2/3 and CRY1/2. Acetylated on Lys-538 by CLOCK during the repression phase of the circadian cycle. Acetylation facilitates recruitment of CRY1 protein and initiates the repression phase of the circadian cycle. Acetylated at Lys-538 by KAT5 during the activation phase of the cycle, leading to recruitment of the positive transcription elongation factor b (P-TEFb) and BRD4, followed by productive elongation of circadian transcripts. Deacetylated by SIRT1, which may result in decreased protein stability. In terms of processing, phosphorylated upon dimerization with CLOCK. Phosphorylation enhances the transcriptional activity, alters the subcellular localization and decreases the stability of the CLOCK-BMAL1 heterodimer by promoting its degradation. Phosphorylation shows circadian variations in the liver with a peak between CT10 to CT14. Phosphorylation at Ser-90 by CK2 is essential for its nuclear localization, its interaction with CLOCK and controls CLOCK nuclear entry. Dephosphorylation at Ser-78 is important for dimerization with CLOCK and transcriptional activity. Post-translationally, sumoylated on Lys-259 upon dimerization with CLOCK. Predominantly conjugated to poly-SUMO2/3 rather than SUMO1 and the level of these conjugates undergo rhythmic variation, peaking at CT9-CT12. Sumoylation localizes it exclusively to the PML body and promotes its ubiquitination in the PML body, ubiquitin-dependent proteasomal degradation and the transcriptional activity of the CLOCK-BMAL1 heterodimer. Undergoes lysosome-mediated degradation in a time-dependent manner in the liver. In terms of tissue distribution, highly expressed in the suprachiasmatic nucleus (SCN). Also expressed in all other tissues examined including kidney, intestine, liver, heart, spleen, brain, muscle, lung, harderian gland and eye. Low expression in kidney and spleen.

It is found in the nucleus. Its subcellular location is the cytoplasm. The protein resides in the PML body. Its function is as follows. Transcriptional activator which forms a core component of the circadian clock. The circadian clock, an internal time-keeping system, regulates various physiological processes through the generation of approximately 24 hour circadian rhythms in gene expression, which are translated into rhythms in metabolism and behavior. It is derived from the Latin roots 'circa' (about) and 'diem' (day) and acts as an important regulator of a wide array of physiological functions including metabolism, sleep, body temperature, blood pressure, endocrine, immune, cardiovascular, and renal function. Consists of two major components: the central clock, residing in the suprachiasmatic nucleus (SCN) of the brain, and the peripheral clocks that are present in nearly every tissue and organ system. Both the central and peripheral clocks can be reset by environmental cues, also known as Zeitgebers (German for 'timegivers'). The predominant Zeitgeber for the central clock is light, which is sensed by retina and signals directly to the SCN. The central clock entrains the peripheral clocks through neuronal and hormonal signals, body temperature and feeding-related cues, aligning all clocks with the external light/dark cycle. Circadian rhythms allow an organism to achieve temporal homeostasis with its environment at the molecular level by regulating gene expression to create a peak of protein expression once every 24 hours to control when a particular physiological process is most active with respect to the solar day. Transcription and translation of core clock components (CLOCK, NPAS2, BMAL1, BMAL2, PER1, PER2, PER3, CRY1 and CRY2) plays a critical role in rhythm generation, whereas delays imposed by post-translational modifications (PTMs) are important for determining the period (tau) of the rhythms (tau refers to the period of a rhythm and is the length, in time, of one complete cycle). A diurnal rhythm is synchronized with the day/night cycle, while the ultradian and infradian rhythms have a period shorter and longer than 24 hours, respectively. Disruptions in the circadian rhythms contribute to the pathology of cardiovascular diseases, cancer, metabolic syndromes and aging. A transcription/translation feedback loop (TTFL) forms the core of the molecular circadian clock mechanism. Transcription factors, CLOCK or NPAS2 and BMAL1 or BMAL2, form the positive limb of the feedback loop, act in the form of a heterodimer and activate the transcription of core clock genes and clock-controlled genes (involved in key metabolic processes), harboring E-box elements (5'-CACGTG-3') within their promoters. The core clock genes: PER1/2/3 and CRY1/2 which are transcriptional repressors form the negative limb of the feedback loop and interact with the CLOCK|NPAS2-BMAL1|BMAL2 heterodimer inhibiting its activity and thereby negatively regulating their own expression. This heterodimer also activates nuclear receptors NR1D1/2 and RORA/B/G, which form a second feedback loop and which activate and repress BMAL1 transcription, respectively. BMAL1 positively regulates myogenesis and negatively regulates adipogenesis via the transcriptional control of the genes of the canonical Wnt signaling pathway. Plays a role in normal pancreatic beta-cell function; regulates glucose-stimulated insulin secretion via the regulation of antioxidant genes NFE2L2/NRF2 and its targets SESN2, PRDX3, CCLC and CCLM. Negatively regulates the mTORC1 signaling pathway; regulates the expression of MTOR and DEPTOR. Controls diurnal oscillations of Ly6C inflammatory monocytes; rhythmic recruitment of the PRC2 complex imparts diurnal variation to chemokine expression that is necessary to sustain Ly6C monocyte rhythms. Regulates the expression of HSD3B2, STAR, PTGS2, CYP11A1, CYP19A1 and LHCGR in the ovary and also the genes involved in hair growth. Plays an important role in adult hippocampal neurogenesis by regulating the timely entry of neural stem/progenitor cells (NSPCs) into the cell cycle and the number of cell divisions that take place prior to cell-cycle exit. Regulates the circadian expression of CIART and KLF11. The CLOCK-BMAL1 heterodimer regulates the circadian expression of SERPINE1/PAI1, VWF, B3, CCRN4L/NOC, NAMPT, DBP, MYOD1, PPARGC1A, PPARGC1B, SIRT1, GYS2, F7, NGFR, GNRHR, BHLHE40/DEC1, ATF4, MTA1, KLF10 and also genes implicated in glucose and lipid metabolism. Promotes rhythmic chromatin opening, regulating the DNA accessibility of other transcription factors. The NPAS2-BMAL1 heterodimer positively regulates the expression of MAOA, F7 and LDHA and modulates the circadian rhythm of daytime contrast sensitivity by regulating the rhythmic expression of adenylate cyclase type 1 (ADCY1) in the retina. The preferred binding motif for the CLOCK-BMAL1 heterodimer is 5'-CACGTGA-3', which contains a flanking adenine nucleotide at the 3-prime end of the canonical 6-nucleotide E-box sequence. CLOCK specifically binds to the half-site 5'-CAC-3', while BMAL1 binds to the half-site 5'-GTGA-3'. The CLOCK-BMAL1 heterodimer also recognizes the non-canonical E-box motifs 5'-AACGTGA-3' and 5'-CATGTGA-3'. Essential for the rhythmic interaction of CLOCK with ASS1 and plays a critical role in positively regulating CLOCK-mediated acetylation of ASS1. Plays a role in protecting against lethal sepsis by limiting the expression of immune checkpoint protein CD274 in macrophages in a PKM2-dependent manner. Regulates the diurnal rhythms of skeletal muscle metabolism via transcriptional activation of genes promoting triglyceride synthesis (DGAT2) and metabolic efficiency (COQ10B). The sequence is that of Basic helix-loop-helix ARNT-like protein 1 (Bmal1) from Nannospalax galili (Northern Israeli blind subterranean mole rat).